The primary structure comprises 69 residues: uncharacterized protein (69 aa).

Residues 1 to 15 (MLLYIVIIVACIISK) are Cytoplasmic-facing. The chain crosses the membrane as a helical span at residues 16–36 (LVPNEYWAIHLFFIIMIFMVY). Residues 37–69 (MYEKLDIHQKYQFWNYTMSGLSGHNVQITCKCY) are Extracellular-facing. A glycan (N-linked (GlcNAc...) asparagine; by host) is linked at Asn-51.

The protein belongs to the asfivirus X69R family.

Its subcellular location is the host membrane. This is an uncharacterized protein from Ornithodoros (relapsing fever ticks).